A 308-amino-acid chain; its full sequence is Ferrochelatase (308 aa).

Positions 167 and 239 each coordinate Fe cation.

The protein belongs to the ferrochelatase family.

It is found in the cytoplasm. It catalyses the reaction heme b + 2 H(+) = protoporphyrin IX + Fe(2+). The protein operates within porphyrin-containing compound metabolism; protoheme biosynthesis; protoheme from protoporphyrin-IX: step 1/1. Catalyzes the ferrous insertion into protoporphyrin IX. The polypeptide is Ferrochelatase (Thermoplasma acidophilum (strain ATCC 25905 / DSM 1728 / JCM 9062 / NBRC 15155 / AMRC-C165)).